The following is a 338-amino-acid chain: Peptidyl-prolyl cis-trans isomerase cyp11 (338 aa).

Residues 7 to 172 form the PPIase cyclophilin-type domain; that stretch reads FFDIDVDGNR…HNVMIANCGE (166 aa). A disordered region spans residues 186–338; sequence ASAVSDESED…RGRFKYRPTY (153 aa). The span at 208 to 218 shows a compositional bias: acidic residues; the sequence is DDSSSDEDSEE. Residues 223–242 show a composition bias toward basic residues; the sequence is RTKKKRSRKHSKKDKKKKKR. The segment covering 243 to 309 has biased composition (basic and acidic residues); the sequence is ESSNRKRSPE…PEKRSSERRV (67 aa). Residues 329 to 338 are compositionally biased toward basic residues; sequence RGRFKYRPTY.

The protein belongs to the cyclophilin-type PPIase family.

It carries out the reaction [protein]-peptidylproline (omega=180) = [protein]-peptidylproline (omega=0). Functionally, PPIases accelerate the folding of proteins. It catalyzes the cis-trans isomerization of proline imidic peptide bonds in oligopeptides. This Rhizopus delemar (strain RA 99-880 / ATCC MYA-4621 / FGSC 9543 / NRRL 43880) (Mucormycosis agent) protein is Peptidyl-prolyl cis-trans isomerase cyp11 (cyp11).